Consider the following 88-residue polypeptide: RNA-binding protein Hfq (88 aa).

The Sm domain occupies 9–68 (DPFLNALRRERIPVSIYLVNGIKLQGQIESFDQFVILLKNTVNQMVYKHAISTVVPARAV). The interval 66–88 (RAVSHHSASDRPQGERPQEKTEE) is disordered. Over residues 72-88 (SASDRPQGERPQEKTEE) the composition is skewed to basic and acidic residues.

The protein belongs to the Hfq family. In terms of assembly, homohexamer.

RNA chaperone that binds small regulatory RNA (sRNAs) and mRNAs to facilitate mRNA translational regulation in response to envelope stress, environmental stress and changes in metabolite concentrations. Also binds with high specificity to tRNAs. This is RNA-binding protein Hfq from Aliivibrio fischeri (strain ATCC 700601 / ES114) (Vibrio fischeri).